The following is a 406-amino-acid chain: Acetylornithine/succinyldiaminopimelate aminotransferase (406 aa).

Pyridoxal 5'-phosphate-binding positions include 108-109 (GT) and phenylalanine 141. A N(2)-acetyl-L-ornithine-binding site is contributed by arginine 144. 226–229 (DEVQ) serves as a coordination point for pyridoxal 5'-phosphate. Position 255 is an N6-(pyridoxal phosphate)lysine (lysine 255). Position 283 (serine 283) interacts with N(2)-acetyl-L-ornithine. Threonine 284 lines the pyridoxal 5'-phosphate pocket.

This sequence belongs to the class-III pyridoxal-phosphate-dependent aminotransferase family. ArgD subfamily. Homodimer. Requires pyridoxal 5'-phosphate as cofactor.

It localises to the cytoplasm. It catalyses the reaction N(2)-acetyl-L-ornithine + 2-oxoglutarate = N-acetyl-L-glutamate 5-semialdehyde + L-glutamate. It carries out the reaction N-succinyl-(2S,6S)-2,6-diaminopimelate + 2-oxoglutarate = (S)-2-succinylamino-6-oxoheptanedioate + L-glutamate. It participates in amino-acid biosynthesis; L-arginine biosynthesis; N(2)-acetyl-L-ornithine from L-glutamate: step 4/4. Its pathway is amino-acid biosynthesis; L-lysine biosynthesis via DAP pathway; LL-2,6-diaminopimelate from (S)-tetrahydrodipicolinate (succinylase route): step 2/3. Functionally, involved in both the arginine and lysine biosynthetic pathways. The protein is Acetylornithine/succinyldiaminopimelate aminotransferase of Escherichia coli O157:H7.